Here is a 2359-residue protein sequence, read N- to C-terminus: Voltage-dependent T-type calcium channel subunit alpha-1H (2359 aa).

Positions 1 to 63 (MTEGTLAADE…PGTECGADLG (63 aa)) are disordered. Residues 1-100 (MTEGTLAADE…SWCLRLVCNP (100 aa)) are Cytoplasmic-facing. Over residues 24-36 (APVRASPASPGAP) the composition is skewed to low complexity. Residues 87–422 (TRPRSWCLRL…LCLVVIATQF (336 aa)) form an I repeat. The helical transmembrane segment at 101–119 (WFEHISMLVIMLNCVTLGM) threads the bilayer. The Extracellular segment spans residues 120–141 (FRPCEDVECRSERCSILEAFDD). Residue Asp-140 coordinates Zn(2+). Residues 142–160 (FIFAFFAVEMVIKMVALGL) traverse the membrane as a helical segment. Topologically, residues 161–169 (FGQKCYLGD) are cytoplasmic. A helical membrane pass occupies residues 170 to 184 (TWNRLDFFIVMAGMM). At 185-193 (EYSLDGHNV) the chain is on the extracellular side. Zn(2+) is bound by residues Asp-189 and His-191. An N-linked (GlcNAc...) asparagine glycan is attached at Asn-192. Residues 194-212 (SLSAIRTVRVLRPLRAINR) traverse the membrane as a helical segment. The Cytoplasmic segment spans residues 213 to 232 (VPSMRILVTLLLDTLPMLGN). A helical membrane pass occupies residues 233 to 253 (VLLLCFFVFFIFGIVGVQLWA). Over 254 to 394 (GLLRNRCFLD…YYVMDAHSFY (141 aa)) the chain is Extracellular. Asn-271 is a glycosylation site (N-linked (GlcNAc...) asparagine). A helical transmembrane segment spans residues 395–419 (NFIYFILLIIMGSFFMINLCLVVIA). The Cytoplasmic portion of the chain corresponds to 420 to 790 (TQFSETKQRE…GKLRRIVDSK (371 aa)). Disordered regions lie at residues 490-573 (VDPS…SESV), 620-656 (GTVN…SPRP), and 737-769 (GDCR…ASQP). A compositionally biased stretch (basic residues) spans 503–532 (RRPRRAGRRTASVHHLVYHHHHHHHHHYHF). The span at 557–566 (PPSPPSPGHG) shows a compositional bias: pro residues. A compositionally biased stretch (polar residues) spans 620-631 (GTVNSKGGTSSR). One copy of the II repeat lies at 776–1015 (WASFSGKLRR…LLVAILVEGF (240 aa)). A helical transmembrane segment spans residues 791 to 811 (YFNRGIMAAILVNTLSMGVEY). Residues 812 to 824 (HEQPEELTNALEI) lie on the Extracellular side of the membrane. The chain crosses the membrane as a helical span at residues 825–846 (SNIVFTSMFALEMLLKLLACGP). Residues 847 to 852 (LGYIRN) are Cytoplasmic-facing. Residues 853–871 (PYNIFDGIVVVISVWEIVG) form a helical membrane-spanning segment. Topologically, residues 872–879 (QANGGLSV) are extracellular. The helical transmembrane segment at 880 to 903 (LRTFRLLRVLKLVRFLPALRRQLV) threads the bilayer. The Cytoplasmic segment spans residues 904–914 (VLMRTMDNVAT). A helical transmembrane segment spans residues 915–935 (FCMLLMLFIFIFSILGMHLFG). The Extracellular segment spans residues 936 to 987 (CKFSLKTDSGDTVPDRKNFDSLLWAIVTVFQILTQEDWNVVLYNGMASTSSW). The chain crosses the membrane as a helical span at residues 988–1012 (AALYFVALMTFGNYVLFNLLVAILV). Residues 1013 to 1301 (EGFQAEGDAT…NRLRVSCQKV (289 aa)) lie on the Cytoplasmic side of the membrane. A disordered region spans residues 1061-1197 (GHLEGRGSLP…GASPGPRATP (137 aa)). Polar residues predominate over residues 1117–1126 (SLASLRSSPC). Over residues 1130–1147 (GPNSAGSSRRSSWNSLGR) the composition is skewed to low complexity. The stretch at 1292–1569 (NRLRVSCQKV…MFVGVVVENF (278 aa)) is one III repeat. The chain crosses the membrane as a helical span at residues 1302 to 1324 (IAHKMFDHVVLVFIFLNCITIAL). Residues 1325 to 1342 (ERPDIDPGSTERAFLSVS) are Extracellular-facing. Residues 1343-1363 (NYIFTAIFVVEMMVKVVALGL) form a helical membrane-spanning segment. Residues 1364–1373 (LWGEHAYLQS) are Cytoplasmic-facing. A helical membrane pass occupies residues 1374–1393 (SWNVLDGLLVLVSLVDIIVA). At 1394 to 1407 (MASAGGAKILGVLR) the chain is on the extracellular side. The chain crosses the membrane as a helical span at residues 1408 to 1429 (VLRLLRTLRPLRVISRAPGLKL). At 1430-1439 (VVETLISSLR) the chain is on the cytoplasmic side. Residues 1440 to 1463 (PIGNIVLICCAFFIIFGILGVQLF) traverse the membrane as a helical segment. The Extracellular segment spans residues 1464–1540 (KGKFYYCEGT…DQQPVQNHNP (77 aa)). Asn-1477 carries an N-linked (GlcNAc...) asparagine glycan. The chain crosses the membrane as a helical span at residues 1541–1566 (WMLLYFISFLLIVSFFVLNMFVGVVV). Residues 1567–1621 (ENFHKCRQHQEAEEARRREEKRLRRLERRRRKAQRRPYYADYSHTRRSIHSLCTS) are Cytoplasmic-facing. An IV repeat occupies 1607–1868 (DYSHTRRSIH…VVVAVLMKHL (262 aa)). The chain crosses the membrane as a helical span at residues 1622 to 1642 (HYLDLFITFIICLNVITMSME). Residues 1643 to 1656 (HYNQPKSLDEALKY) are Extracellular-facing. A helical membrane pass occupies residues 1657-1678 (CNYVFTIVFVFEAALKLVAFGF). Topologically, residues 1679 to 1685 (RRFFKDR) are cytoplasmic. A helical membrane pass occupies residues 1686–1704 (WNQLDLAIVLLSIMGIALE). Residues 1705-1718 (EIEMNAALPINPTI) are Extracellular-facing. The helical transmembrane segment at 1719–1742 (IRIMRVLRIARVLKLLKMATGMRA) threads the bilayer. Over 1743–1756 (LLDTVVQALPQVGN) the chain is Cytoplasmic. The chain crosses the membrane as a helical span at residues 1757–1777 (LGLLFMLLFFIYAALGVELFG). Residues 1778 to 1840 (RLECSEDNPC…KHCLSYLPAL (63 aa)) lie on the Extracellular side of the membrane. The helical transmembrane segment at 1841–1868 (SPVYFVTFMLVAQFVLVNVVVAVLMKHL) threads the bilayer. The Cytoplasmic portion of the chain corresponds to 1869-2359 (EESNKEARED…APDDSGDEPV (491 aa)). The span at 1891–1911 (QGSTAQPPPTAQESQGTQPDT) shows a compositional bias: polar residues. Disordered regions lie at residues 1891–1913 (QGST…DTPN), 1974–2003 (SFQV…PRSL), 2016–2258 (HSES…GERW), and 2335–2359 (PQTP…DEPV). A compositionally biased stretch (basic and acidic residues) spans 2016–2026 (HSESLEGKVDD). The span at 2086–2096 (DEAEAADPADE) shows a compositional bias: acidic residues. The span at 2166–2181 (GESHLESGEVRGRASE) shows a compositional bias: basic and acidic residues.

It belongs to the calcium channel alpha-1 subunit (TC 1.A.1.11) family. CACNA1H subfamily. In terms of assembly, interacts (via N-terminal cytoplasmic domain) with STAC. In response to raising of intracellular calcium, the T-type channels are activated by CaM-kinase II. Expressed in brain.

It is found in the cell membrane. The catalysed reaction is Ca(2+)(in) = Ca(2+)(out). In terms of biological role, voltage-sensitive calcium channel that gives rise to T-type calcium currents. T-type calcium channels belong to the 'low-voltage activated (LVA)' group. A particularity of this type of channel is an opening at quite negative potentials, and a voltage-dependent inactivation. T-type channels serve pacemaking functions in both central neurons and cardiac nodal cells and support calcium signaling in secretory cells and vascular smooth muscle. They may also be involved in the modulation of firing patterns of neurons. In the adrenal zona glomerulosa, participates in the signaling pathway leading to aldosterone production in response to either AGT/angiotensin II, or hyperkalemia. The chain is Voltage-dependent T-type calcium channel subunit alpha-1H (Cacna1h) from Rattus norvegicus (Rat).